A 134-amino-acid polypeptide reads, in one-letter code: Prefoldin subunit alpha (134 aa).

This sequence belongs to the prefoldin subunit alpha family. In terms of assembly, heterohexamer of two alpha and four beta subunits.

The protein localises to the cytoplasm. Its function is as follows. Molecular chaperone capable of stabilizing a range of proteins. Seems to fulfill an ATP-independent, HSP70-like function in archaeal de novo protein folding. The chain is Prefoldin subunit alpha from Pyrobaculum calidifontis (strain DSM 21063 / JCM 11548 / VA1).